A 153-amino-acid chain; its full sequence is SsrA-binding protein (153 aa).

It belongs to the SmpB family.

Its subcellular location is the cytoplasm. Required for rescue of stalled ribosomes mediated by trans-translation. Binds to transfer-messenger RNA (tmRNA), required for stable association of tmRNA with ribosomes. tmRNA and SmpB together mimic tRNA shape, replacing the anticodon stem-loop with SmpB. tmRNA is encoded by the ssrA gene; the 2 termini fold to resemble tRNA(Ala) and it encodes a 'tag peptide', a short internal open reading frame. During trans-translation Ala-aminoacylated tmRNA acts like a tRNA, entering the A-site of stalled ribosomes, displacing the stalled mRNA. The ribosome then switches to translate the ORF on the tmRNA; the nascent peptide is terminated with the 'tag peptide' encoded by the tmRNA and targeted for degradation. The ribosome is freed to recommence translation, which seems to be the essential function of trans-translation. This chain is SsrA-binding protein, found in Orientia tsutsugamushi (strain Boryong) (Rickettsia tsutsugamushi).